Reading from the N-terminus, the 109-residue chain is Preprofallaxidin-8 (109 aa).

The signal sequence occupies residues 1 to 22 (MASLKKSLFLVLFLGLLSLSIC). A propeptide spanning residues 23–46 (EEQKRENEEDAEDENHEEESEEKR) is cleaved from the precursor. The disordered stretch occupies residues 27–46 (RENEEDAEDENHEEESEEKR). Residues 30–42 (EEDAEDENHEEES) are compositionally biased toward acidic residues. Position 62 is a leucine amide (L62). The propeptide occupies 66–70 (SEEKR). Methionine amide is present on M75. The propeptide occupies 79 to 83 (SEEKR). Methionine amide is present on M88. Propeptides lie at residues 92 to 96 (SEEKR) and A108.

It belongs to the frog skin active peptide (FSAP) family. Brevinin subfamily. In terms of tissue distribution, expressed by the skin glands.

It localises to the secreted. Its function is as follows. Fallaxidin-2.1 shows no antibacterial activity against Gram-positive or Gram-negative bacteria. Does not inhibit the formation of NO by neuronal nitric oxide synthase. Has no effect on splenocyte proliferation or smooth muscle contraction. Functionally, fallaxidin-3.2 shows antibacterial activity against the Gram-positive bacteria E.faecalis (MIC=100 uM) and L.lactis (MIC=500 uM). No antibacterial activity against the Gram-positive bacteria B.cereus, L.innocua, M.luteus, S.epidermidis, S.uberis and S.aureus, or the Gram-negative bacteria E.cloacae and E.coli. The polypeptide is Preprofallaxidin-8 (Litoria fallax (Eastern dwarf tree frog)).